The sequence spans 258 residues: Ribosomal RNA small subunit methyltransferase J (258 aa).

S-adenosyl-L-methionine-binding positions include 123–124 (ER) and aspartate 177. Residues 232–258 (IDGPKPSHSLEGKSSRYDIYPKKALKA) are disordered. The span at 239 to 252 (HSLEGKSSRYDIYP) shows a compositional bias: basic and acidic residues.

This sequence belongs to the methyltransferase superfamily. RsmJ family.

The protein localises to the cytoplasm. The enzyme catalyses guanosine(1516) in 16S rRNA + S-adenosyl-L-methionine = N(2)-methylguanosine(1516) in 16S rRNA + S-adenosyl-L-homocysteine + H(+). In terms of biological role, specifically methylates the guanosine in position 1516 of 16S rRNA. This is Ribosomal RNA small subunit methyltransferase J from Pseudomonas putida (strain W619).